Reading from the N-terminus, the 214-residue chain is MTSETVSPSSFGASPETAVVAALAGRSLALVGMMGAGKSTIGRRLAARLRMRFVDADAEIELAAGMPIPEIFETHGEPHFRDGEARVIARLLNGGPIVLATGGGAVLREETRARLSERAVSIWLKADAEVILRRVRRRADRPLLQTADPAATIKRLIAEREPIYRQADITVASRDVPYEWIVDECIGLLHRRLCRGEMTRNAMKDPDEGFDTTQ.

ATP is bound at residue 35 to 40 (GAGKST). Position 39 (serine 39) interacts with Mg(2+). Substrate-binding residues include aspartate 57, arginine 81, and glycine 103. Arginine 141 contributes to the ATP binding site. Arginine 160 contributes to the substrate binding site.

It belongs to the shikimate kinase family. As to quaternary structure, monomer. Mg(2+) serves as cofactor.

The protein resides in the cytoplasm. The enzyme catalyses shikimate + ATP = 3-phosphoshikimate + ADP + H(+). The protein operates within metabolic intermediate biosynthesis; chorismate biosynthesis; chorismate from D-erythrose 4-phosphate and phosphoenolpyruvate: step 5/7. Functionally, catalyzes the specific phosphorylation of the 3-hydroxyl group of shikimic acid using ATP as a cosubstrate. The chain is Shikimate kinase from Nitrobacter winogradskyi (strain ATCC 25391 / DSM 10237 / CIP 104748 / NCIMB 11846 / Nb-255).